The primary structure comprises 261 residues: Syntaxin-7 (261 aa).

At Ser2 the chain carries N-acetylserine. The Cytoplasmic portion of the chain corresponds to 2-238 (SYTPGVGGDP…DYQRKSRKTL (237 aa)). Thr4 carries the phosphothreonine modification. A Phosphoserine modification is found at Ser45. Positions 47-69 (ELRQQLQQKQQYTNQLAKETDKY) form a coiled coil. Ser75 is subject to Phosphoserine. Thr79 carries the phosphothreonine modification. 4 positions are modified to phosphoserine: Ser125, Ser126, Ser129, and Ser205. Positions 129–148 (SGSFPEDSSKERNLVSWESQ) are disordered. One can recognise a t-SNARE coiled-coil homology domain in the interval 165–227 (LRLIHERESS…QQANQQLSRA (63 aa)). The helical; Anchor for type IV membrane protein transmembrane segment at 239-259 (CIIILILVIGVAIISLIIWGL) threads the bilayer. The Vesicular segment spans residues 260-261 (NH).

This sequence belongs to the syntaxin family. Forms a SNARE complex with VTI1B, STX8 and VAMP8 which functions in the homotypic fusion of late endosomes. Component of the SNARE complex composed of STX7, STX8, VAMP7 and VTI1B that is required for heterotypic fusion of late endosomes with lysosomes. Interacts with VPS11, VPS16 and VPS18. Interacts with VPS33A. Interacts with TPC1. Highest expression is found in placenta followed by heart, skeletal muscle, kidney and brain. Low expression is found in pancreas, lung and liver.

Its subcellular location is the early endosome membrane. Its function is as follows. May be involved in protein trafficking from the plasma membrane to the early endosome (EE) as well as in homotypic fusion of endocytic organelles. Mediates the endocytic trafficking from early endosomes to late endosomes and lysosomes. The chain is Syntaxin-7 (STX7) from Homo sapiens (Human).